The primary structure comprises 128 residues: MAIWQGASRRLSTGAKVWRAAKKHKREMGRPAAETQVSDRIKRKIVRCRGANLKVKLEKTNYANVFDQANKVCKKVAVTKVLDNKANKHYIRRNVMTKGAIIETEMGKAKVTSRPGQDGVVNAVLLTE.

This sequence belongs to the eukaryotic ribosomal protein eS8 family. Part of the 30S ribosomal subunit.

The chain is Small ribosomal subunit protein eS8 from Methanococcus maripaludis (strain C6 / ATCC BAA-1332).